The sequence spans 920 residues: Disintegrin and metalloproteinase domain-containing protein 19 (920 aa).

Residues 1-26 (MPGRAGVARFCLLALALQLHWPLAAC) form the signal peptide. The propeptide occupies 27–204 (EPGWTTRGSQ…TKKQPRRMKR (178 aa)). The Extracellular segment spans residues 27–703 (EPGWTTRGSQ…VDSGPLPPKS (677 aa)). The short motif at 131-138 (STCRGIRG) is the Cysteine switch element. Cysteine 133 provides a ligand contact to Zn(2+). Asparagine 145 carries an N-linked (GlcNAc...) asparagine glycan. In terms of domain architecture, Peptidase M12B spans 211-409 (KYVELYLVAD…GGGMCLSNMP (199 aa)). 3 cysteine pairs are disulfide-bonded: cysteine 321–cysteine 404, cysteine 361–cysteine 388, and cysteine 362–cysteine 371. Histidine 346 contributes to the Zn(2+) binding site. Glutamate 347 is a catalytic residue. Zn(2+) is bound by residues histidine 350 and histidine 356. Residues 417 to 503 (GRRCGNGYLE…HCPTNYYQMD (87 aa)) enclose the Disintegrin domain. Residues asparagine 445 and asparagine 448 are each glycosylated (N-linked (GlcNAc...) asparagine). Cysteine 475 and cysteine 495 are disulfide-bonded. Asparagine 649 carries N-linked (GlcNAc...) asparagine glycosylation. One can recognise an EGF-like domain in the interval 654–686 (ETEGCGKKCNGHGVCNNNKNCHCFPGWSPPFCN). 3 disulfide bridges follow: cysteine 658–cysteine 668, cysteine 662–cysteine 674, and cysteine 676–cysteine 685. The chain crosses the membrane as a helical span at residues 704 to 724 (VGPVIAGVFSALFVLAVLVLL). The Cytoplasmic segment spans residues 725-920 (CHCYRQSHKL…RVGAIISSKI (196 aa)). The tract at residues 755–920 (SQSGGTGHAN…RVGAIISSKI (166 aa)) is disordered. A compositionally biased stretch (polar residues) spans 767 to 783 (FKLQTPQGKRKVTNTPE). Positions 825 to 834 (ARIERKESAR) are enriched in basic and acidic residues. The SH3-binding signature appears at 835-846 (RPPPSRPMPPAP). Pro residues-rich tracts occupy residues 835–846 (RPPPSRPMPPAP) and 888–903 (TSGP…PVPK).

As to quaternary structure, interacts with SH3PXD2A. Zn(2+) serves as cofactor. The precursor is cleaved by a furin endopeptidase. Widely expressed, with the highest expression in bone, heart and lung, followed by brain and spleen and relatively low expression in liver, skeletal muscle, kidney and testis. In bone, primarily expressed in cell of the osteoblast lineage and not detected in mature osteoclasts.

It is found in the membrane. Participates in the proteolytic processing of beta-type neuregulin isoforms which are involved in neurogenesis and synaptogenesis, suggesting a regulatory role in glial cell. Also cleaves alpha-2 macroglobulin. May be involved in osteoblast differentiation and/or osteoblast activity in bone. This chain is Disintegrin and metalloproteinase domain-containing protein 19 (Adam19), found in Mus musculus (Mouse).